The sequence spans 607 residues: UvrABC system protein C (607 aa).

The GIY-YIG domain occupies 16 to 94; it reads GRPGVYRMFD…IKEWRPPYNI (79 aa). Residues 203–238 form the UVR domain; sequence QQLGNELNAEMEKAAMALDFEKAAELRDQIALLRRV.

The protein belongs to the UvrC family. In terms of assembly, interacts with UvrB in an incision complex.

It localises to the cytoplasm. The UvrABC repair system catalyzes the recognition and processing of DNA lesions. UvrC both incises the 5' and 3' sides of the lesion. The N-terminal half is responsible for the 3' incision and the C-terminal half is responsible for the 5' incision. This chain is UvrABC system protein C, found in Pseudomonas putida (strain ATCC 47054 / DSM 6125 / CFBP 8728 / NCIMB 11950 / KT2440).